A 180-amino-acid chain; its full sequence is Chromosome-anchoring protein RacA (180 aa).

A DNA-binding region (H-T-H motif) is located at residues 5–25 (TPFIAKKLGVSPKAVVRIAQQ). A coiled-coil region spans residues 89-151 (SHDFEQLTAQ…LEATLKKEEP (63 aa)).

Belongs to the RacA family.

It is found in the cytoplasm. Functionally, required for the formation of axial filaments and for anchoring the origin regions at the cell poles in sporulating cells, thus ensuring proper chromosome segregation in the prespore. Binds in a dispersed manner throughout the chromosome but preferentially to sites clustered in the origin portion of the chromosome, causing condensation of the chromosome and its remodeling into an elongated, anchored structure. The chain is Chromosome-anchoring protein RacA from Bacillus cereus (strain ATCC 10987 / NRS 248).